A 91-amino-acid chain; its full sequence is ATP synthase subunit c (91 aa).

Transmembrane regions (helical) follow at residues 4 to 24 (FTMC…GTGI) and 53 to 73 (IGLA…LIIL).

This sequence belongs to the ATPase C chain family. F-type ATPases have 2 components, F(1) - the catalytic core - and F(0) - the membrane proton channel. F(1) has five subunits: alpha(3), beta(3), gamma(1), delta(1), epsilon(1). F(0) has three main subunits: a(1), b(2) and c(10-14). The alpha and beta chains form an alternating ring which encloses part of the gamma chain. F(1) is attached to F(0) by a central stalk formed by the gamma and epsilon chains, while a peripheral stalk is formed by the delta and b chains.

It is found in the cell inner membrane. Functionally, f(1)F(0) ATP synthase produces ATP from ADP in the presence of a proton or sodium gradient. F-type ATPases consist of two structural domains, F(1) containing the extramembraneous catalytic core and F(0) containing the membrane proton channel, linked together by a central stalk and a peripheral stalk. During catalysis, ATP synthesis in the catalytic domain of F(1) is coupled via a rotary mechanism of the central stalk subunits to proton translocation. Its function is as follows. Key component of the F(0) channel; it plays a direct role in translocation across the membrane. A homomeric c-ring of between 10-14 subunits forms the central stalk rotor element with the F(1) delta and epsilon subunits. The sequence is that of ATP synthase subunit c from Geotalea uraniireducens (strain Rf4) (Geobacter uraniireducens).